Here is an 886-residue protein sequence, read N- to C-terminus: Alanine--tRNA ligase (886 aa).

Positions 564, 568, 666, and 670 each coordinate Zn(2+).

Belongs to the class-II aminoacyl-tRNA synthetase family. It depends on Zn(2+) as a cofactor.

It is found in the cytoplasm. The enzyme catalyses tRNA(Ala) + L-alanine + ATP = L-alanyl-tRNA(Ala) + AMP + diphosphate. Its function is as follows. Catalyzes the attachment of alanine to tRNA(Ala) in a two-step reaction: alanine is first activated by ATP to form Ala-AMP and then transferred to the acceptor end of tRNA(Ala). Also edits incorrectly charged Ser-tRNA(Ala) and Gly-tRNA(Ala) via its editing domain. The sequence is that of Alanine--tRNA ligase from Prochlorococcus marinus subsp. pastoris (strain CCMP1986 / NIES-2087 / MED4).